The sequence spans 349 residues: Anthranilate phosphoribosyltransferase (349 aa).

Residues G82, 85–86, 92–95, 110–118, and S122 each bind 5-phospho-alpha-D-ribose 1-diphosphate; these read GD, NVST, and KHGNRAVSG. G82 is an anthranilate binding site. S94 lines the Mg(2+) pocket. Position 113 (N113) interacts with anthranilate. Residue R168 participates in anthranilate binding. D227 and E228 together coordinate Mg(2+).

This sequence belongs to the anthranilate phosphoribosyltransferase family. In terms of assembly, homodimer. Requires Mg(2+) as cofactor.

The catalysed reaction is N-(5-phospho-beta-D-ribosyl)anthranilate + diphosphate = 5-phospho-alpha-D-ribose 1-diphosphate + anthranilate. Its pathway is amino-acid biosynthesis; L-tryptophan biosynthesis; L-tryptophan from chorismate: step 2/5. Functionally, catalyzes the transfer of the phosphoribosyl group of 5-phosphorylribose-1-pyrophosphate (PRPP) to anthranilate to yield N-(5'-phosphoribosyl)-anthranilate (PRA). This chain is Anthranilate phosphoribosyltransferase, found in Pseudomonas syringae pv. tomato (strain ATCC BAA-871 / DC3000).